The chain runs to 518 residues: ORC1-type DNA replication protein 7 (518 aa).

94 to 98 (TGKTA) lines the ATP pocket. Residues 165–196 (DDDPNALEIGGSPGDDRTGNESSEGSDVSDSF) are disordered. The span at 186–196 (SSEGSDVSDSF) shows a compositional bias: low complexity. ATP is bound by residues Tyr-318 and Arg-330.

The protein belongs to the CDC6/cdc18 family.

Involved in regulation of DNA replication. Required to initiate DNA replication of the circular chromosome at a nearby autonomously replicating sequence (ARS) oriC1. The chain is ORC1-type DNA replication protein 7 (orc7) from Halobacterium salinarum (strain ATCC 700922 / JCM 11081 / NRC-1) (Halobacterium halobium).